Reading from the N-terminus, the 122-residue chain is Glycine cleavage system H protein (122 aa).

A Lipoyl-binding domain is found at 19 to 101 (MVTVGVTHYA…ETEGWLWKMT (83 aa)). Residue K60 is modified to N6-lipoyllysine.

Belongs to the GcvH family. As to quaternary structure, the glycine cleavage system is composed of four proteins: P, T, L and H. (R)-lipoate is required as a cofactor.

The glycine cleavage system catalyzes the degradation of glycine. The H protein shuttles the methylamine group of glycine from the P protein to the T protein. This Bartonella tribocorum (strain CIP 105476 / IBS 506) protein is Glycine cleavage system H protein.